Here is a 404-residue protein sequence, read N- to C-terminus: Pyruvate-flavodoxin oxidoreductase (404 aa).

This sequence belongs to the pyruvate:ferredoxin/flavodoxin oxidoreductase family.

The enzyme catalyses oxidized [flavodoxin] + pyruvate + CoA + 2 H(+) = reduced [flavodoxin] + acetyl-CoA + CO2. Functionally, oxidoreductase required for the transfer of electrons from pyruvate to flavodoxin, which reduces nitrogenase. The chain is Pyruvate-flavodoxin oxidoreductase (nifJ) from Nostoc sp. (strain ATCC 29151 / PCC 7119) (Anabaena sp.).